The chain runs to 79 residues: uncharacterized protein (79 aa).

This is an uncharacterized protein from Haemophilus influenzae (strain ATCC 51907 / DSM 11121 / KW20 / Rd).